The following is a 271-amino-acid chain: 5-deoxy-glucuronate isomerase (271 aa).

This sequence belongs to the isomerase IolB family.

The enzyme catalyses 5-deoxy-D-glucuronate = 5-dehydro-2-deoxy-D-gluconate. Its pathway is polyol metabolism; myo-inositol degradation into acetyl-CoA; acetyl-CoA from myo-inositol: step 4/7. Its function is as follows. Involved in the isomerization of 5-deoxy-glucuronate (5DG) to 5-dehydro-2-deoxy-D-gluconate (DKG or 2-deoxy-5-keto-D-gluconate). This chain is 5-deoxy-glucuronate isomerase, found in Lacticaseibacillus casei (Lactobacillus casei).